Reading from the N-terminus, the 176-residue chain is Disulfide bond formation protein B (176 aa).

At methionine 1–alanine 14 the chain is on the cytoplasmic side. The chain crosses the membrane as a helical span at residues tryptophan 15 to tryptophan 31. Residues phenylalanine 32–cysteine 49 are Periplasmic-facing. The cysteines at positions 41 and 44 are disulfide-linked. A helical transmembrane segment spans residues alanine 50 to proline 65. The Cytoplasmic portion of the chain corresponds to lysine 66–tyrosine 71. A helical transmembrane segment spans residues valine 72–tyrosine 89. Over glutamate 90–glutamine 144 the chain is Periplasmic. Cysteine 104 and cysteine 130 are disulfide-bonded. A helical membrane pass occupies residues tryptophan 145–serine 163. Residues glutamine 164–arginine 176 are Cytoplasmic-facing.

Belongs to the DsbB family.

Its subcellular location is the cell inner membrane. Functionally, required for disulfide bond formation in some periplasmic proteins. Acts by oxidizing the DsbA protein. This is Disulfide bond formation protein B from Escherichia coli O1:K1 / APEC.